We begin with the raw amino-acid sequence, 261 residues long: Hydroxylase cctR (261 aa).

The chain crosses the membrane as a helical span at residues 38–58; sequence VFVSLLILSNTISFGLLGWIG. An N-linked (GlcNAc...) asparagine glycan is attached at N95. Short sequence motifs (HXXHC) lie at residues 146-150 and 176-180; these read HEIHC and HIAHC.

Belongs to the ustYa family.

It localises to the membrane. The protein operates within mycotoxin biosynthesis. In terms of biological role, hydroxylase; part of the gene cluster that mediates the biosynthesis of the mycotoxin cyclochlorotine, a hepatotoxic and carcinogenic cyclic chlorinated pentapeptide. Within the pathway, cctR performs the last step by hydroxylating cyclochlorotine to yield hydroxycyclochlorotine. The NRPS cctN initially catalyzes the condensation of L-serine (Ser), Pro, L-2-aminobutyrate (2Abu), Ser, and beta-Phe in this order to produce isocyclotine. After the dichlorination of Pro2 catalyzed by cctP2 to produce isocyclochlorotine, the cctO-mediated transacylation of isocyclochlorotine can furnish cyclochlorotine. The subsequent hydroxylation of cyclochlorotine by cctR yields hydroxycyclochlorotine as the final product. CctP1 probably acts as a phenylalanine aminomutase and provides the uncommon building block beta-Phe. Furthermore, 2Abu can be synthesized from threonine by one of the threonine dehydratases and transaminases localized outside of the cluster. The functions of the remaining proteins encoded by the cluster, cctM and cctT, have not been identified yet. This Talaromyces islandicus (Penicillium islandicum) protein is Hydroxylase cctR.